We begin with the raw amino-acid sequence, 501 residues long: Glycosyltransferase family 92 protein F13G3.3 (501 aa).

A helical membrane pass occupies residues 10–30 (LSVVLLFSFLFFVTAVLLQFI). Residues 151 to 439 (KPVVMCISPL…ISDCYKQSYY (289 aa)) form the GT92 domain.

This sequence belongs to the glycosyltransferase 92 family.

The protein localises to the membrane. This Caenorhabditis elegans protein is Glycosyltransferase family 92 protein F13G3.3.